We begin with the raw amino-acid sequence, 491 residues long: Serine/threonine-protein kinase 33 (491 aa).

Residues 51-89 (FASQERKKERNTSRESSLKDLSIRTSNVERKPQAQWSRS) are disordered. Over residues 54-82 (QERKKERNTSRESSLKDLSIRTSNVERKP) the composition is skewed to basic and acidic residues. One can recognise a Protein kinase domain in the interval 111–377 (YTFGRILGQG…AKELLDNQWL (267 aa)). ATP contacts are provided by residues 117 to 125 (LGQGSFGMV) and K140. Residue D233 is the Proton acceptor of the active site. The tract at residues 398-491 (KNNPESDEET…TTLFRGKKRL (94 aa)) is disordered. Acidic residues predominate over residues 402–414 (ESDEETNTDEETE). S403 is subject to Phosphoserine. Over residues 415–431 (QSAVYSPSANTAKQPTN) the composition is skewed to polar residues. Over residues 445 to 457 (SSNSSSSKLLSAE) the composition is skewed to low complexity. The span at 475-484 (AKTTLKSTTL) shows a compositional bias: polar residues.

Belongs to the protein kinase superfamily. CAMK Ser/Thr protein kinase family. CaMK subfamily. Homodimer. In terms of processing, autophosphorylated. Highly expressed in testis, particularly in cells from the spermatogenic epithelia. Present in meiotic and post meiotic sperm cells. Significant expression is detected in lung epithelia, alveolar macrophages, horizontal cells in the retina and in embryonic organs such as heart, brain and spinal cord. Also expressed in pituitary gland, kidney, pancreas, trachea and thyroid gland.

The protein localises to the cytoplasm. It localises to the cytoskeleton. The protein resides in the perinuclear region. The enzyme catalyses L-seryl-[protein] + ATP = O-phospho-L-seryl-[protein] + ADP + H(+). It catalyses the reaction L-threonyl-[protein] + ATP = O-phospho-L-threonyl-[protein] + ADP + H(+). Specifically inhibited by CDD-2807 ((3-([1,1'-Biphenyl]-2-ylethynyl)-1H-indazol-5-yl)(2,6-diazaspiro[3.5]nonan-2-yl)methanone). CDD-2807 is a potential male contraceptive drug: it is not toxic, efficiently crosses the blood-testis barrier and induces a reversible contraceptive effect in male mice. In terms of biological role, serine/threonine protein kinase required for spermatid differentiation and male fertility. Promotes sperm flagella assembly during spermatogenesis by mediating phosphorylation of fibrous sheath proteins AKAP3 and AKAP4. Also phosphorylates vimentin/VIM, thereby regulating the dynamic behavior of the intermediate filament cytoskeleton. The sequence is that of Serine/threonine-protein kinase 33 from Mus musculus (Mouse).